The sequence spans 298 residues: Ribosomal RNA small subunit methyltransferase A (298 aa).

S-adenosyl-L-methionine contacts are provided by N30, V32, G57, E78, D108, and N126.

The protein belongs to the class I-like SAM-binding methyltransferase superfamily. rRNA adenine N(6)-methyltransferase family. RsmA subfamily.

It is found in the cytoplasm. It carries out the reaction adenosine(1518)/adenosine(1519) in 16S rRNA + 4 S-adenosyl-L-methionine = N(6)-dimethyladenosine(1518)/N(6)-dimethyladenosine(1519) in 16S rRNA + 4 S-adenosyl-L-homocysteine + 4 H(+). Specifically dimethylates two adjacent adenosines (A1518 and A1519) in the loop of a conserved hairpin near the 3'-end of 16S rRNA in the 30S particle. May play a critical role in biogenesis of 30S subunits. This is Ribosomal RNA small subunit methyltransferase A from Cutibacterium acnes (strain DSM 16379 / KPA171202) (Propionibacterium acnes).